The following is a 294-amino-acid chain: Non-selective voltage-gated ion channel VDAC2 (294 aa).

An N-acetylalanine modification is found at A2. ATP is bound by residues K23 and K31. N6-acetyllysine; alternate is present on K31. At K31 the chain carries N6-succinyllysine; alternate. K31 is covalently cross-linked (Glycyl lysine isopeptide (Lys-Gly) (interchain with G-Cter in ubiquitin); alternate). Transmembrane regions (beta stranded) follow at residues 37 to 46 (LVKLDVKTKS) and 50 to 58 (VEFSTSGSS). Residues K64 and K72 each participate in a glycyl lysine isopeptide (Lys-Gly) (interchain with G-Cter in ubiquitin) cross-link. Residues 65-75 (VTGTLETKYKW) traverse the membrane as a beta stranded segment. Residue Y78 is modified to Phosphotyrosine. 3 beta stranded membrane-spanning segments follow: residues 80 to 87 (LTFTEKWN), 91 to 100 (TLGTEIAIED), and 106 to 115 (LKLTFDTTFS). T118 is subject to Phosphothreonine. At K120 the chain carries N6-acetyllysine; alternate. A Glycyl lysine isopeptide (Lys-Gly) (interchain with G-Cter in ubiquitin); alternate cross-link involves residue K120. Glycyl lysine isopeptide (Lys-Gly) (interchain with G-Cter in ubiquitin) cross-links involve residues K121 and K124. Beta stranded transmembrane passes span 122 to 131 (SGKIKSSYKR), 134 to 141 (INLGCDVD), 148 to 156 (AIHGSAVFG), and 161 to 169 (LAGYQMTFD). K172 participates in a covalent cross-link: Glycyl lysine isopeptide (Lys-Gly) (interchain with G-Cter in ubiquitin). Transmembrane regions (beta stranded) follow at residues 174 to 186 (KLTR…GYRT), 189 to 196 (FQLHTNVN), 200 to 209 (EFGGSIYQKV), 213 to 222 (LDTSVNLAWT), 229 to 238 (RFGIAAKYQL), and 242 to 249 (ASISAKVN). S251 bears the Phosphoserine mark. Residues 253–255 (LIG) and 271–275 (SALVD) each bind NAD(+). 2 beta stranded membrane passes run 253-262 (LIGVGYTQTL) and 265-274 (GVKLTLSALV). K277 carries the post-translational modification N6-acetyllysine; alternate. K277 is covalently cross-linked (Glycyl lysine isopeptide (Lys-Gly) (interchain with G-Cter in ubiquitin); alternate). Residues 284 to 293 (HKVGLALELE) traverse the membrane as a beta stranded segment. Residue K285 forms a Glycyl lysine isopeptide (Lys-Gly) (interchain with G-Cter in ubiquitin) linkage.

Belongs to the eukaryotic mitochondrial porin family. In terms of assembly, monomer, homodimer and higher order oligomers; formation of higher order structures is necessary for scramblase activity. Interacts with ARMC12 in a TBC1D21-dependent manner. Interacts with KLC3. Interacts with SPATA33. Interacts with PPP3CC in a SPATA33-dependent manner. Ubiquitinated by PRKN during mitophagy, leading to its degradation and enhancement of mitophagy. Deubiquitinated by USP30. Expressed in erythrocytes (at protein level). Expressed in all tissues examined.

It localises to the mitochondrion outer membrane. Its subcellular location is the membrane. The enzyme catalyses chloride(in) = chloride(out). It catalyses the reaction K(+)(in) = K(+)(out). The catalysed reaction is a 1,2-diacyl-sn-glycero-3-phospho-L-serine(in) = a 1,2-diacyl-sn-glycero-3-phospho-L-serine(out). It carries out the reaction a 1,2-diacyl-sn-glycero-3-phosphocholine(in) = a 1,2-diacyl-sn-glycero-3-phosphocholine(out). The enzyme catalyses a 1,2-diacyl-sn-glycero-3-phospho-(1D-myo-inositol)(in) = a 1,2-diacyl-sn-glycero-3-phospho-(1D-myo-inositol)(out). Its function is as follows. Non-selective voltage-gated ion channel that mediates the transport of anions and cations through the mitochondrion outer membrane and plasma membrane. The channel adopts an open conformation at zero mV and a closed conformation at both positive and negative potentials. There are two populations of channels; the main that functions in a lower open-state conductance with lower ion selectivity, that switch, in a voltage-dependent manner, from the open to a low-conducting 'closed' state and the other that has a normal ion selectivity in the typical high conductance, 'open' state. Binds various lipids, including the sphingolipid ceramide, the phospholipid phosphatidylcholine, and the sterols cholesterol and oxysterol. Binding of ceramide promotes the mitochondrial outer membrane permeabilization (MOMP) apoptotic pathway. Catalyzes the scrambling of phospholipids across the outer mitochondrial membrane; the mechanism is unrelated to channel activity and is capable of translocating both anionic and zwitterionic phospholipids. This chain is Non-selective voltage-gated ion channel VDAC2, found in Homo sapiens (Human).